The primary structure comprises 263 residues: Probable esterase PIR7A (263 aa).

Ser82 (acyl-ester intermediate) is an active-site residue. Residues Asp213 and His241 each act as charge relay system in the active site.

It belongs to the AB hydrolase superfamily.

This Oryza sativa subsp. indica (Rice) protein is Probable esterase PIR7A (PIR7A).